Consider the following 306-residue polypeptide: Pantothenate kinase (306 aa).

91–98 is an ATP binding site; sequence GSVAVGKS.

The protein belongs to the prokaryotic pantothenate kinase family.

It localises to the cytoplasm. The catalysed reaction is (R)-pantothenate + ATP = (R)-4'-phosphopantothenate + ADP + H(+). Its pathway is cofactor biosynthesis; coenzyme A biosynthesis; CoA from (R)-pantothenate: step 1/5. The chain is Pantothenate kinase (coaA) from Streptococcus pyogenes serotype M1.